Here is a 327-residue protein sequence, read N- to C-terminus: UPF0285 protein Maeo_0978 (327 aa).

The protein belongs to the UPF0285 family.

This chain is UPF0285 protein Maeo_0978, found in Methanococcus aeolicus (strain ATCC BAA-1280 / DSM 17508 / OCM 812 / Nankai-3).